Consider the following 549-residue polypeptide: Glucose-6-phosphate isomerase (549 aa).

E355 functions as the Proton donor in the catalytic mechanism. Residues H386 and K514 contribute to the active site.

This sequence belongs to the GPI family.

The protein localises to the cytoplasm. It catalyses the reaction alpha-D-glucose 6-phosphate = beta-D-fructose 6-phosphate. Its pathway is carbohydrate biosynthesis; gluconeogenesis. The protein operates within carbohydrate degradation; glycolysis; D-glyceraldehyde 3-phosphate and glycerone phosphate from D-glucose: step 2/4. Its function is as follows. Catalyzes the reversible isomerization of glucose-6-phosphate to fructose-6-phosphate. In Salmonella gallinarum (strain 287/91 / NCTC 13346), this protein is Glucose-6-phosphate isomerase.